Consider the following 235-residue polypeptide: Orotidine 5'-phosphate decarboxylase (235 aa).

Residues aspartate 10, lysine 33, 60–69, threonine 123, arginine 185, glutamine 194, glycine 214, and arginine 215 contribute to the substrate site; that span reads DLKMHDIPNT. Residue lysine 62 is the Proton donor of the active site.

Belongs to the OMP decarboxylase family. Type 1 subfamily. Homodimer.

The catalysed reaction is orotidine 5'-phosphate + H(+) = UMP + CO2. It functions in the pathway pyrimidine metabolism; UMP biosynthesis via de novo pathway; UMP from orotate: step 2/2. Functionally, catalyzes the decarboxylation of orotidine 5'-monophosphate (OMP) to uridine 5'-monophosphate (UMP). This Lactobacillus acidophilus (strain ATCC 700396 / NCK56 / N2 / NCFM) protein is Orotidine 5'-phosphate decarboxylase.